The following is a 564-amino-acid chain: Dihydroxy-acid dehydratase (564 aa).

C50 contributes to the [2Fe-2S] cluster binding site. A Mg(2+)-binding site is contributed by D82. Residue C123 participates in [2Fe-2S] cluster binding. Mg(2+) contacts are provided by D124 and K125. The residue at position 125 (K125) is an N6-carboxylysine. C195 contributes to the [2Fe-2S] cluster binding site. E447 is a binding site for Mg(2+). S473 (proton acceptor) is an active-site residue.

The protein belongs to the IlvD/Edd family. As to quaternary structure, homodimer. [2Fe-2S] cluster serves as cofactor. Mg(2+) is required as a cofactor.

It carries out the reaction (2R)-2,3-dihydroxy-3-methylbutanoate = 3-methyl-2-oxobutanoate + H2O. The enzyme catalyses (2R,3R)-2,3-dihydroxy-3-methylpentanoate = (S)-3-methyl-2-oxopentanoate + H2O. It participates in amino-acid biosynthesis; L-isoleucine biosynthesis; L-isoleucine from 2-oxobutanoate: step 3/4. It functions in the pathway amino-acid biosynthesis; L-valine biosynthesis; L-valine from pyruvate: step 3/4. In terms of biological role, functions in the biosynthesis of branched-chain amino acids. Catalyzes the dehydration of (2R,3R)-2,3-dihydroxy-3-methylpentanoate (2,3-dihydroxy-3-methylvalerate) into 2-oxo-3-methylpentanoate (2-oxo-3-methylvalerate) and of (2R)-2,3-dihydroxy-3-methylbutanoate (2,3-dihydroxyisovalerate) into 2-oxo-3-methylbutanoate (2-oxoisovalerate), the penultimate precursor to L-isoleucine and L-valine, respectively. This chain is Dihydroxy-acid dehydratase, found in Chloroflexus aggregans (strain MD-66 / DSM 9485).